The sequence spans 672 residues: Glycerophosphocholine phosphodiesterase GPCPD1 (672 aa).

One can recognise a CBM20 domain in the interval 1–115 (MTPSQVAFEI…IIIDDGQFGI (115 aa)). Residues Lys-70 and 88-89 (HK) contribute to the substrate site. Residues Ser-175 and Ser-424 each carry the phosphoserine modification. The region spanning 318-618 (PLDVGHRGAG…DRIYDWMPEQ (301 aa)) is the GP-PDE domain. Tyr-608 bears the Phosphotyrosine mark.

Belongs to the glycerophosphoryl diester phosphodiesterase family. As to expression, widely expressed, with highest expression in spinal chord.

Its subcellular location is the cytoplasm. It localises to the cytosol. The catalysed reaction is sn-glycerol 3-phosphocholine + H2O = sn-glycerol 3-phosphate + choline + H(+). Functionally, may be involved in the negative regulation of skeletal muscle differentiation, independently of its glycerophosphocholine phosphodiesterase activity. This is Glycerophosphocholine phosphodiesterase GPCPD1 (GPCPD1) from Homo sapiens (Human).